Consider the following 25-residue polypeptide: Granule-bound starch synthase 1, chloroplastic/amyloplastic (25 aa).

Residue Lys16 participates in ADP-alpha-D-glucose binding.

It belongs to the glycosyltransferase 1 family. Bacterial/plant glycogen synthase subfamily. Expressed in endosperm.

Its subcellular location is the plastid. The protein resides in the chloroplast. It is found in the amyloplast. The catalysed reaction is an NDP-alpha-D-glucose + [(1-&gt;4)-alpha-D-glucosyl](n) = [(1-&gt;4)-alpha-D-glucosyl](n+1) + a ribonucleoside 5'-diphosphate + H(+). Its pathway is glycan biosynthesis; starch biosynthesis. Required for the synthesis of amylose in endosperm. This Fagopyrum esculentum (Common buckwheat) protein is Granule-bound starch synthase 1, chloroplastic/amyloplastic.